The sequence spans 222 residues: Cytolethal distending toxin subunit A (222 aa).

A signal peptide spans Met1–Ala15. Residue Cys16 is the site of N-palmitoyl cysteine attachment. Cys16 is lipidated: S-diacylglycerol cysteine. The segment at Met22–Gln44 is disordered. The tract at residues Trp90–Tyr101 is mediates binding to target cells. The region spanning His122 to Leu211 is the Ricin B-type lectin domain.

In terms of assembly, heterotrimer of 3 subunits, CdtA, CdtB and CdtC. May form higher oligomers.

Its subcellular location is the cell outer membrane. CDTs are cytotoxins which induce host cell distension, growth arrest in G2/M phase, nucleus swelling, and chromatin fragmentation in HeLa cells. The chain is Cytolethal distending toxin subunit A (cdtA) from Aggregatibacter actinomycetemcomitans (Actinobacillus actinomycetemcomitans).